A 198-amino-acid chain; its full sequence is Recombination protein RecR (198 aa).

The C4-type zinc finger occupies 57–72 (CSSCGHITDKDPCYIC). The region spanning 80–175 (SIICVVQDPK…KITRIAHGLP (96 aa)) is the Toprim domain.

The protein belongs to the RecR family.

Functionally, may play a role in DNA repair. It seems to be involved in an RecBC-independent recombinational process of DNA repair. It may act with RecF and RecO. This chain is Recombination protein RecR, found in Anoxybacillus flavithermus (strain DSM 21510 / WK1).